The following is a 276-amino-acid chain: Octanoyltransferase LipM (276 aa).

One can recognise a BPL/LPL catalytic domain in the interval 32–247 (GALPPVIRFY…GFEKGLDIKL (216 aa)). C149 acts as the Acyl-thioester intermediate in catalysis.

Belongs to the octanoyltransferase LipM family. In terms of assembly, monomer.

It carries out the reaction octanoyl-[ACP] + L-lysyl-[protein] = N(6)-octanoyl-L-lysyl-[protein] + holo-[ACP] + H(+). It participates in protein modification; protein lipoylation via endogenous pathway; protein N(6)-(lipoyl)lysine from octanoyl-[acyl-carrier-protein]. Functionally, catalyzes the transfer of endogenously produced octanoic acid from octanoyl-acyl-carrier-protein onto the lipoyl domain of GcvH, an intermediate carrier during protein lipoylation. This chain is Octanoyltransferase LipM, found in Macrococcus caseolyticus (strain JCSC5402) (Macrococcoides caseolyticum).